The chain runs to 320 residues: Malate dehydrogenase (320 aa).

NAD(+) contacts are provided by residues Gly10–Gly15 and Asp34. Substrate contacts are provided by Arg83 and Arg89. NAD(+) contacts are provided by residues Asn96 and Ile119–Asn121. Substrate-binding residues include Asn121 and Arg152. Catalysis depends on His176, which acts as the Proton acceptor.

Belongs to the LDH/MDH superfamily. MDH type 3 family.

It carries out the reaction (S)-malate + NAD(+) = oxaloacetate + NADH + H(+). Functionally, catalyzes the reversible oxidation of malate to oxaloacetate. This is Malate dehydrogenase from Methylorubrum extorquens (strain CM4 / NCIMB 13688) (Methylobacterium extorquens).